The primary structure comprises 86 residues: ATP synthase epsilon chain (86 aa).

This sequence belongs to the ATPase epsilon chain family. F-type ATPases have 2 components, CF(1) - the catalytic core - and CF(0) - the membrane proton channel. CF(1) has five subunits: alpha(3), beta(3), gamma(1), delta(1), epsilon(1). CF(0) has three main subunits: a, b and c.

Its subcellular location is the cell inner membrane. Produces ATP from ADP in the presence of a proton gradient across the membrane. The polypeptide is ATP synthase epsilon chain (atpC) (Caulobacter vibrioides (strain ATCC 19089 / CIP 103742 / CB 15) (Caulobacter crescentus)).